Reading from the N-terminus, the 877-residue chain is Telomere length regulation protein clk-2 (877 aa).

Residues 488 to 501 are compositionally biased toward polar residues; sequence NKDSAAITSKNNLR. The segment at 488–509 is disordered; it reads NKDSAAITSKNNLRLDSDDDED.

Belongs to the TEL2 family.

Its subcellular location is the nucleus. The protein localises to the chromosome. It localises to the telomere. DNA damage checkpoint protein required for DNA damage-induced cell cycle arrest and apoptosis, thereby playing a role in genome stability. Regulator of telomere length. In Caenorhabditis elegans, this protein is Telomere length regulation protein clk-2 (clk-2).